Here is a 108-residue protein sequence, read N- to C-terminus: Nucleoid-associated protein Bphyt_1827 (108 aa).

Residues 87 to 108 form a disordered region; it reads AQEKMGGMTSGLPLPPGFKLPF. Residues 99 to 108 are compositionally biased toward pro residues; it reads PLPPGFKLPF.

The protein belongs to the YbaB/EbfC family. As to quaternary structure, homodimer.

It is found in the cytoplasm. Its subcellular location is the nucleoid. Functionally, binds to DNA and alters its conformation. May be involved in regulation of gene expression, nucleoid organization and DNA protection. This chain is Nucleoid-associated protein Bphyt_1827, found in Paraburkholderia phytofirmans (strain DSM 17436 / LMG 22146 / PsJN) (Burkholderia phytofirmans).